The following is a 348-amino-acid chain: MTAQPQTLKIRRPDDWHIHLRDDEMLSTVLPYTSEVFARAIVMPNLAQPITTVASAIAYRERILAAVPAGHKFTPLMTCYLTNSLDAKELTTGFEQGVFTAAKLYPANATTNSTHGVSDIPAIYPLFEQMQKIGMPLLIHGEVTDAAVDIFDREARFIDQILEPIRQKFPELKIVFEHITTKDAADYVLAGNRFLGATVTPQHLMFNRNHMLVGGIRPHLFCLPILKRSTHQQALRAAVASGSDRFFLGTDSAPHAKHRKESSCGCAGVFNAPAALPAYASVFEELNALQHLEAFCALNGPRFYGLPVNDDVVELVRTPFLQPEEIPLGNESVIPFLAGQTLNWSVKR.

Zn(2+) contacts are provided by H17 and H19. Residues 19-21 (HLR) and N45 contribute to the substrate site. Positions 103, 140, and 178 each coordinate Zn(2+). K103 carries the post-translational modification N6-carboxylysine. H140 is a binding site for substrate. Residue L223 coordinates substrate. D251 lines the Zn(2+) pocket. Residue D251 is part of the active site. Positions 255 and 267 each coordinate substrate.

Belongs to the metallo-dependent hydrolases superfamily. DHOase family. Class II DHOase subfamily. As to quaternary structure, homodimer. Requires Zn(2+) as cofactor.

It carries out the reaction (S)-dihydroorotate + H2O = N-carbamoyl-L-aspartate + H(+). It participates in pyrimidine metabolism; UMP biosynthesis via de novo pathway; (S)-dihydroorotate from bicarbonate: step 3/3. In terms of biological role, catalyzes the reversible cyclization of carbamoyl aspartate to dihydroorotate. This is Dihydroorotase from Yersinia pestis.